The following is a 45-amino-acid chain: Large ribosomal subunit protein bL34 (45 aa).

The protein belongs to the bacterial ribosomal protein bL34 family.

In Streptomyces avermitilis (strain ATCC 31267 / DSM 46492 / JCM 5070 / NBRC 14893 / NCIMB 12804 / NRRL 8165 / MA-4680), this protein is Large ribosomal subunit protein bL34.